A 1062-amino-acid polypeptide reads, in one-letter code: Valine--tRNA ligase, mitochondrial (1062 aa).

The transit peptide at 1 to 15 (MPHLPLASFRPPLRG) directs the protein to the mitochondrion. The disordered stretch occupies residues 1-73 (MPHLPLASFR…AKGKPPAEST (73 aa)). Over residues 42 to 56 (RNREAKQKRLREKQA) the composition is skewed to basic and acidic residues. The short motif at 146–156 (PNVTGSLHIGH) is the 'HIGH' region element. Residues 659–663 (KMSKS) carry the 'KMSKS' region motif. Residue K662 coordinates ATP.

The protein belongs to the class-I aminoacyl-tRNA synthetase family.

Its subcellular location is the mitochondrion. It carries out the reaction tRNA(Val) + L-valine + ATP = L-valyl-tRNA(Val) + AMP + diphosphate. In terms of biological role, catalyzes the attachment of valine to tRNA(Val) in a two-step reaction: valine is first activated by ATP to form Val-AMP and then transferred to the acceptor end of tRNA(Val). In Sus scrofa (Pig), this protein is Valine--tRNA ligase, mitochondrial (VARS2).